A 146-amino-acid polypeptide reads, in one-letter code: Stress enhanced protein 1, chloroplastic (146 aa).

A chloroplast-targeting transit peptide spans M1–R73. The next 2 membrane-spanning stretches (helical) occupy residues L84–I104 and L120–F140.

The protein belongs to the ELIP/psbS family.

Its subcellular location is the plastid. The protein localises to the chloroplast thylakoid membrane. Its function is as follows. May be involved in non-photochemical quenching, a process that maintains the balance between dissipation and utilization of light energy to minimize generation of oxidizing molecules, thereby protecting the plant against photo-oxidative damage. May play a photoprotective role in the thylakoid membrane in response to light stress. In Arabidopsis thaliana (Mouse-ear cress), this protein is Stress enhanced protein 1, chloroplastic.